We begin with the raw amino-acid sequence, 262 residues long: Hemin import ATP-binding protein HmuV (262 aa).

One can recognise an ABC transporter domain in the interval 3–244; that stretch reads LQARNLTLAR…DHMRRVYGIE (242 aa). 35-42 contacts ATP; sequence GANGAGKS.

This sequence belongs to the ABC transporter superfamily. Heme (hemin) importer (TC 3.A.1.14.5) family. The complex is composed of two ATP-binding proteins (HmuV), two transmembrane proteins (HmuU) and a solute-binding protein (HmuT).

Its subcellular location is the cell inner membrane. Its function is as follows. Part of the ABC transporter complex HmuTUV involved in hemin import. Responsible for energy coupling to the transport system. The chain is Hemin import ATP-binding protein HmuV from Bordetella parapertussis (strain 12822 / ATCC BAA-587 / NCTC 13253).